The chain runs to 148 residues: FAD synthase (148 aa).

ATP-binding positions include 14–15 (VF), 19–22 (HVGH), and Asp100.

This sequence belongs to the archaeal FAD synthase family. In terms of assembly, homodimer. It depends on a divalent metal cation as a cofactor.

It catalyses the reaction FMN + ATP + H(+) = FAD + diphosphate. It participates in cofactor biosynthesis; FAD biosynthesis; FAD from FMN: step 1/1. In terms of biological role, catalyzes the transfer of the AMP portion of ATP to flavin mononucleotide (FMN) to produce flavin adenine dinucleotide (FAD) coenzyme. The chain is FAD synthase from Pyrococcus abyssi (strain GE5 / Orsay).